Consider the following 244-residue polypeptide: Agamous-like MADS-box protein MADS3 (244 aa).

In terms of domain architecture, MADS-box spans 1–61; sequence MGRGRVELKR…GKLYEFGSAG (61 aa). The K-box domain occupies 85–175; that stretch reads TQSWYQEVSK…KLKLEAEGQS (91 aa). The interval 180–206 is disordered; it reads QGSWNPSTATAGNSSFPVHPSQSNPMD. Positions 181–204 are enriched in polar residues; that stretch reads GSWNPSTATAGNSSFPVHPSQSNP.

Expressed in flowers and seeds.

It localises to the nucleus. Probable transcription factor involved in flower development. The sequence is that of Agamous-like MADS-box protein MADS3 from Vitis vinifera (Grape).